The sequence spans 382 residues: Carbamoyl phosphate synthase small chain (382 aa).

The tract at residues 1–189 (MIKSALLVLE…GLPEAKKEDE (189 aa)) is CPSase. L-glutamine-binding residues include Ser-47, Gly-241, and Gly-243. A Glutamine amidotransferase type-1 domain is found at 193-380 (HVVAYDFGAK…IELIEQYRKT (188 aa)). Cys-269 serves as the catalytic Nucleophile. L-glutamine contacts are provided by Leu-270, Gln-273, Asn-311, Gly-313, and Phe-314. Residues His-353 and Glu-355 contribute to the active site.

The protein belongs to the CarA family. Composed of two chains; the small (or glutamine) chain promotes the hydrolysis of glutamine to ammonia, which is used by the large (or ammonia) chain to synthesize carbamoyl phosphate. Tetramer of heterodimers (alpha,beta)4.

It carries out the reaction hydrogencarbonate + L-glutamine + 2 ATP + H2O = carbamoyl phosphate + L-glutamate + 2 ADP + phosphate + 2 H(+). The catalysed reaction is L-glutamine + H2O = L-glutamate + NH4(+). Its pathway is amino-acid biosynthesis; L-arginine biosynthesis; carbamoyl phosphate from bicarbonate: step 1/1. It participates in pyrimidine metabolism; UMP biosynthesis via de novo pathway; (S)-dihydroorotate from bicarbonate: step 1/3. Functionally, small subunit of the glutamine-dependent carbamoyl phosphate synthetase (CPSase). CPSase catalyzes the formation of carbamoyl phosphate from the ammonia moiety of glutamine, carbonate, and phosphate donated by ATP, constituting the first step of 2 biosynthetic pathways, one leading to arginine and/or urea and the other to pyrimidine nucleotides. The small subunit (glutamine amidotransferase) binds and cleaves glutamine to supply the large subunit with the substrate ammonia. The sequence is that of Carbamoyl phosphate synthase small chain from Escherichia coli O157:H7.